A 266-amino-acid polypeptide reads, in one-letter code: Hydroxyacylglutathione hydrolase (266 aa).

Positions 53, 55, 57, 58, 118, 140, and 178 each coordinate Zn(2+).

This sequence belongs to the metallo-beta-lactamase superfamily. Glyoxalase II family. Monomer. Zn(2+) serves as cofactor.

The enzyme catalyses an S-(2-hydroxyacyl)glutathione + H2O = a 2-hydroxy carboxylate + glutathione + H(+). Its pathway is secondary metabolite metabolism; methylglyoxal degradation; (R)-lactate from methylglyoxal: step 2/2. Functionally, thiolesterase that catalyzes the hydrolysis of S-D-lactoyl-glutathione to form glutathione and D-lactic acid. This Cupriavidus metallidurans (strain ATCC 43123 / DSM 2839 / NBRC 102507 / CH34) (Ralstonia metallidurans) protein is Hydroxyacylglutathione hydrolase.